Here is a 444-residue protein sequence, read N- to C-terminus: tRNA-2-methylthio-N(6)-dimethylallyladenosine synthase (444 aa).

The region spanning 6-124 (KTFKIITYGC…LPQLIEEIKA (119 aa)) is the MTTase N-terminal domain. Residues cysteine 15, cysteine 51, cysteine 85, cysteine 161, cysteine 165, and cysteine 168 each coordinate [4Fe-4S] cluster. Residues 147-377 (RARGAQAFVT…MELQNSISLA (231 aa)) enclose the Radical SAM core domain. A TRAM domain is found at 380-443 (EALVGQEVEV…TWLLKGEMVD (64 aa)).

The protein belongs to the methylthiotransferase family. MiaB subfamily. In terms of assembly, monomer. Requires [4Fe-4S] cluster as cofactor.

Its subcellular location is the cytoplasm. It carries out the reaction N(6)-dimethylallyladenosine(37) in tRNA + (sulfur carrier)-SH + AH2 + 2 S-adenosyl-L-methionine = 2-methylsulfanyl-N(6)-dimethylallyladenosine(37) in tRNA + (sulfur carrier)-H + 5'-deoxyadenosine + L-methionine + A + S-adenosyl-L-homocysteine + 2 H(+). Functionally, catalyzes the methylthiolation of N6-(dimethylallyl)adenosine (i(6)A), leading to the formation of 2-methylthio-N6-(dimethylallyl)adenosine (ms(2)i(6)A) at position 37 in tRNAs that read codons beginning with uridine. In Moorella thermoacetica (strain ATCC 39073 / JCM 9320), this protein is tRNA-2-methylthio-N(6)-dimethylallyladenosine synthase.